The primary structure comprises 421 residues: UDP-N-acetylglucosamine 1-carboxyvinyltransferase (421 aa).

22–23 (KN) is a binding site for phosphoenolpyruvate. Residue Arg93 coordinates UDP-N-acetyl-alpha-D-glucosamine. The active-site Proton donor is Cys117. Position 117 is a 2-(S-cysteinyl)pyruvic acid O-phosphothioketal (Cys117). Residues 122–126 (RPVDL), Asp308, and Val330 contribute to the UDP-N-acetyl-alpha-D-glucosamine site.

It belongs to the EPSP synthase family. MurA subfamily.

It is found in the cytoplasm. The enzyme catalyses phosphoenolpyruvate + UDP-N-acetyl-alpha-D-glucosamine = UDP-N-acetyl-3-O-(1-carboxyvinyl)-alpha-D-glucosamine + phosphate. The protein operates within cell wall biogenesis; peptidoglycan biosynthesis. Its function is as follows. Cell wall formation. Adds enolpyruvyl to UDP-N-acetylglucosamine. This Pseudomonas paraeruginosa (strain DSM 24068 / PA7) (Pseudomonas aeruginosa (strain PA7)) protein is UDP-N-acetylglucosamine 1-carboxyvinyltransferase.